Consider the following 1033-residue polypeptide: Integrin alpha-IIb (1033 aa).

The signal sequence occupies residues 1 to 31; it reads MARASCAWHSLWLLQWTPLFLGPSAVPPVWA. Topologically, residues 32–988 are extracellular; the sequence is LNLDSEKFSV…TQLLRALEER (957 aa). FG-GAP repeat units lie at residues 35-96, 109-173, 184-237, 252-304, 305-370, 372-431, and 434-495; these read DSEK…GGKC, NLGF…GRAE, SVYA…ISSY, TYDN…DSYY, QPLH…PQAL, TPTL…GLSP, and SQVL…VQDS. Residues Asn-46 and Asn-75 are each glycosylated (N-linked (GlcNAc...) asparagine). 3 disulfides stabilise this stretch: Cys-87–Cys-96, Cys-138–Cys-161, and Cys-177–Cys-197. Ca(2+) is bound by residues Glu-273, Asp-275, Asp-277, Thr-280, Glu-282, Asp-327, Asn-329, Asp-331, Arg-333, Asp-335, Asp-395, Asp-399, Tyr-401, Asp-403, Asp-456, Asp-458, Asn-460, Tyr-462, and Asp-464. 2 disulfide bridges follow: Cys-503/Cys-514 and Cys-520/Cys-575. Residue Asn-600 is glycosylated (N-linked (GlcNAc...) asparagine). Disulfide bonds link Cys-632/Cys-638, Cys-704/Cys-717, Cys-856/Cys-916, and Cys-905/Cys-911. The N-linked (GlcNAc...) asparagine glycan is linked to Asn-710. N-linked (GlcNAc...) asparagine glycosylation occurs at Asn-957. The chain crosses the membrane as a helical span at residues 989-1014; the sequence is AIPVWWVLVGVLGGLLLLTLLVLAMW. The Cytoplasmic portion of the chain corresponds to 1015–1033; the sequence is KAGFFKRNRPPLEEDEEEE. The GFFKR motif signature appears at 1017–1021; the sequence is GFFKR.

This sequence belongs to the integrin alpha chain family. As to quaternary structure, heterodimer of an alpha and a beta subunit. The alpha subunit is composed of a heavy and a light chain linked by a disulfide bond. Alpha-IIb associates with beta-3. Directly interacts with RNF181. Interacts (via C-terminus cytoplasmic tail region) with CIB1; the interaction is direct and calcium-dependent. Interacts (via C-terminus cytoplasmic tail region) with CIB2, CIB3 and CIB4; the interactions are stabilized/increased in a calcium and magnesium-dependent manner. ITGA2B:ITGB3 interacts with PPIA/CYPA; the interaction is ROS and PPIase activity-dependent and is increased in the presence of thrombin. ITGA2B:ITGB3 interacts with SELP (via C-type lectin domain); the interaction mediates cell-cell interaction and adhesion. Post-translationally, cleaved by ELANE; the cleavage promotes activation of platelet fibrinogen receptor integrin alpha-IIb/beta-3.

The protein resides in the membrane. Functionally, integrin alpha-IIb/beta-3 is a receptor for fibronectin, fibrinogen, plasminogen, prothrombin, thrombospondin and vitronectin. It recognizes the sequence R-G-D in a wide array of ligands. It recognizes the sequence H-H-L-G-G-G-A-K-Q-A-G-D-V in fibrinogen gamma chain. Following activation integrin alpha-IIb/beta-3 brings about platelet/platelet interaction through binding of soluble fibrinogen. This step leads to rapid platelet aggregation which physically plugs ruptured endothelial cell surface. In Mus musculus (Mouse), this protein is Integrin alpha-IIb (Itga2b).